A 468-amino-acid chain; its full sequence is Citrate synthase, mitochondrial (468 aa).

A mitochondrion-targeting transit peptide spans 1 to 30 (MSLITAGRLCARILGAKNSPCALIAARQAS). Catalysis depends on residues H303 and H349. R358 contributes to the oxaloacetate binding site. The active site involves D404. Oxaloacetate-binding residues include R430 and R450.

The protein belongs to the citrate synthase family. In terms of assembly, homodimer.

It is found in the mitochondrion matrix. It carries out the reaction oxaloacetate + acetyl-CoA + H2O = citrate + CoA + H(+). It participates in carbohydrate metabolism; tricarboxylic acid cycle; isocitrate from oxaloacetate: step 1/2. Key enzyme of the Krebs tricarboxylic acid cycle which catalyzes the synthesis of citrate from acetyl coenzyme A and oxaloacetate. This is Citrate synthase, mitochondrial (cs) from Xenopus tropicalis (Western clawed frog).